The chain runs to 176 residues: MADFNQILTPGDVDAGIINVVNEIPEGSCHKIEWNRKVAAFQLDRVEPAIFAKPTNYGFIPQTLDEDGDELDVLLITRQPLATGVFLEAKVIGVMKFVDDGEVDDKIVCVPADDRDTGNAYNSLADLPANLIKQIEFHFNNYKALKKPGSTKVTHWGDVEEAKEVIRESIKRWNER.

Substrate is bound by residues Lys-31, Arg-45, and Tyr-57. Residues Asp-67, Asp-72, and Asp-104 each contribute to the Mg(2+) site. Tyr-142 lines the substrate pocket.

Belongs to the PPase family. Homohexamer. Mg(2+) serves as cofactor.

It localises to the cytoplasm. It carries out the reaction diphosphate + H2O = 2 phosphate + H(+). In terms of biological role, catalyzes the hydrolysis of inorganic pyrophosphate (PPi) forming two phosphate ions. This is Inorganic pyrophosphatase from Haemophilus influenzae (strain ATCC 51907 / DSM 11121 / KW20 / Rd).